The sequence spans 219 residues: Large ribosomal subunit protein uL3 (219 aa).

The disordered stretch occupies residues 133 to 153 (GRASHGNSRSHNVPGSIGMAQ). Q153 is subject to N5-methylglutamine.

The protein belongs to the universal ribosomal protein uL3 family. In terms of assembly, part of the 50S ribosomal subunit. Forms a cluster with proteins L14 and L19. Post-translationally, methylated by PrmB.

One of the primary rRNA binding proteins, it binds directly near the 3'-end of the 23S rRNA, where it nucleates assembly of the 50S subunit. The polypeptide is Large ribosomal subunit protein uL3 (Burkholderia thailandensis (strain ATCC 700388 / DSM 13276 / CCUG 48851 / CIP 106301 / E264)).